Reading from the N-terminus, the 359-residue chain is DNA polymerase IV (359 aa).

The UmuC domain occupies 6–186 (IIHVDMDAFY…LPIEAFWGVG (181 aa)). Mg(2+)-binding residues include D10 and D104. The active site involves E105.

Belongs to the DNA polymerase type-Y family. As to quaternary structure, monomer. Mg(2+) is required as a cofactor.

The protein resides in the cytoplasm. It carries out the reaction DNA(n) + a 2'-deoxyribonucleoside 5'-triphosphate = DNA(n+1) + diphosphate. Poorly processive, error-prone DNA polymerase involved in untargeted mutagenesis. Copies undamaged DNA at stalled replication forks, which arise in vivo from mismatched or misaligned primer ends. These misaligned primers can be extended by PolIV. Exhibits no 3'-5' exonuclease (proofreading) activity. May be involved in translesional synthesis, in conjunction with the beta clamp from PolIII. The protein is DNA polymerase IV of Akkermansia muciniphila (strain ATCC BAA-835 / DSM 22959 / JCM 33894 / BCRC 81048 / CCUG 64013 / CIP 107961 / Muc).